The chain runs to 291 residues: 33 kDa chaperonin (291 aa).

Disulfide bonds link cysteine 237–cysteine 239 and cysteine 270–cysteine 273.

Belongs to the HSP33 family. Under oxidizing conditions two disulfide bonds are formed involving the reactive cysteines. Under reducing conditions zinc is bound to the reactive cysteines and the protein is inactive.

Its subcellular location is the cytoplasm. Functionally, redox regulated molecular chaperone. Protects both thermally unfolding and oxidatively damaged proteins from irreversible aggregation. Plays an important role in the bacterial defense system toward oxidative stress. The polypeptide is 33 kDa chaperonin (Clostridioides difficile (strain 630) (Peptoclostridium difficile)).